The chain runs to 158 residues: MMMDILMYLFETYIHSDSELQVDQDELEDELLRAGFHQDDIYKALHWLEDLAALQDTENQAAITMCSNTSMRIYTSREISRINMECRGFLLFLEQINVLTTEIREMVIDRVMGLETSEFELDDLKWIILMVLFNVPGNESAYTQMEELLYTKEQGILH.

This sequence belongs to the Smg family.

This chain is Protein Smg homolog, found in Vibrio atlanticus (strain LGP32) (Vibrio splendidus (strain Mel32)).